The sequence spans 149 residues: Protein cornichon homolog 2 (149 aa).

A run of 3 helical transmembrane segments spans residues 3–23, 59–79, and 117–137; these read IELI…GLTA, ALCA…MAPV, and YFSL…TLFI.

It belongs to the cornichon family.

It is found in the endoplasmic reticulum membrane. The protein resides in the golgi apparatus membrane. Its function is as follows. Acts as a cargo receptor necessary for the transportation of secretory proteins from the endoplasmic reticulum (ER) in COPII-coated vesicles targeted to the Golgi apparatus. The protein is Protein cornichon homolog 2 of Oryza sativa subsp. japonica (Rice).